We begin with the raw amino-acid sequence, 489 residues long: Betaine aldehyde dehydrogenase (489 aa).

Residue N93 coordinates K(+). 150-152 (GAW) contributes to the NAD(+) binding site. The active-site Charge relay system is K162. 176–179 (KPSE) is a binding site for NAD(+). Residue V180 participates in K(+) binding. NAD(+) is bound at residue 229–232 (EVGT). K(+) is bound at residue L245. The Proton acceptor role is filled by E251. 3 residues coordinate NAD(+): G253, C285, and E386. The active-site Nucleophile is C285. C285 is modified (cysteine sulfenic acid (-SOH)). K(+) contacts are provided by K456 and G459. The active-site Charge relay system is the E463.

Belongs to the aldehyde dehydrogenase family. Dimer of dimers. K(+) is required as a cofactor.

The enzyme catalyses betaine aldehyde + NAD(+) + H2O = glycine betaine + NADH + 2 H(+). Its pathway is amine and polyamine biosynthesis; betaine biosynthesis via choline pathway; betaine from betaine aldehyde: step 1/1. Its function is as follows. Involved in the biosynthesis of the osmoprotectant glycine betaine. Catalyzes the irreversible oxidation of betaine aldehyde to the corresponding acid. This chain is Betaine aldehyde dehydrogenase, found in Chromohalobacter salexigens (strain ATCC BAA-138 / DSM 3043 / CIP 106854 / NCIMB 13768 / 1H11).